Here is a 268-residue protein sequence, read N- to C-terminus: Tryptophan synthase alpha chain (268 aa).

Active-site proton acceptor residues include Glu49 and Asp60.

Belongs to the TrpA family. As to quaternary structure, tetramer of two alpha and two beta chains.

The enzyme catalyses (1S,2R)-1-C-(indol-3-yl)glycerol 3-phosphate + L-serine = D-glyceraldehyde 3-phosphate + L-tryptophan + H2O. The protein operates within amino-acid biosynthesis; L-tryptophan biosynthesis; L-tryptophan from chorismate: step 5/5. The alpha subunit is responsible for the aldol cleavage of indoleglycerol phosphate to indole and glyceraldehyde 3-phosphate. This is Tryptophan synthase alpha chain from Escherichia coli O139:H28 (strain E24377A / ETEC).